The chain runs to 883 residues: MTSVSGGSPLLRPQLYRTVTVSTILQADQQDRFLESGELSQLATYLTSGNKRLDIIITLTNNSEAIVSRAANRIFVGGSPISYLERPQSGIDAKLGTNSYVESQSGFLEGFRSLFNTGGADITPAGFKPINVSRYGITRMQKSLRDLDWFLRYITYAIVAGDPNILVTNIRGLREIIENACSSAVTLVALQEMRRASLSYFTKDASAEAIVKQYFDVVITEFLAPAPSDLVRKRTSTSLQGLKLPQIYANAVVQKPRFQMKSTLSTTEKETVIKAVYRQIFERDVRRAYSLKNYDLESKVKNGQLSIKEFVRALGKSKLYAQQFYEPFINSRALELAFRHFLGRGPGSREEVQEYFALISKGGLPLLVDALVDSKEYEEYFGEEIVPYLRTLGEEAQECRNWGAQIKLLNYSARFQKTPQFITLFAGYKNPLPDQHPYGQGNDPLEIQFGAIFPKETLQTKAAFFGKDTRRILIRRGNGIDNQLSNPSARQKSPGSFGPKVFKLSSVASLNKNTKNVSFGETSTQAIIKAVYLQIIGRETYESQRLKVWEIKLENGEISIREFVKQVAKSNLFRSLYWTPYYVCKSIEYINRRILGRPTYGRSEINKLFDIAAKKGFYALIDTLMDSPEYDESFGENTVPYERYLTPGGLALRIKRPNLSVSKEAKNELRFIELGAINESRGERSIQLRIQQGVSKRREQTKIFKLNHHDDKVNLEKVIKAVYRQVFERDMDMYRIQNEFTVFESRLKNKEISVKEFVEALGQSQLYQKEFYTPYPNTKVIELAMKHFLGRAPKNQIEIRKYNQLLASNGIAALIRSLVSSLEYAEVFGEDTVPYRRFPTFPATNFPNTEKLYNSLTKQTKTISNPSFAPEKTRRIDLLSPGA.

Cysteine 181 is a (2R,3E)-phycocyanobilin binding site. PBS-linker domains follow at residues 238-418, 488-669, and 684-861; these read SLQG…FQKT, SARQ…KNEL, and RSIQ…KQTK.

Belongs to the phycobilisome linker protein family. Contains one covalently linked bilin chromophore. This protein autochromophorylates (Potential).

The protein resides in the plastid. The protein localises to the cyanelle thylakoid membrane. In terms of biological role, this protein is postulated to act both as terminal energy acceptor and as a linker polypeptide that stabilizes the phycobilisome architecture. May have intrinsic bilin lyase activity. This Cyanophora paradoxa protein is Phycobiliprotein ApcE (apcE).